A 339-amino-acid polypeptide reads, in one-letter code: Fructose-1,6-bisphosphatase isozyme 2 (339 aa).

Residues 3 to 10 (DRSPFETD) form an important for interaction with ALDOA region. AMP contacts are provided by residues Val-18 and 28 to 32 (TGELT). Asp-69 and Glu-98 together coordinate Mg(2+). AMP is bound at residue 113–114 (KY). The Mg(2+) site is built by Asp-119, Leu-121, and Asp-122. Asp-122 provides a ligand contact to substrate. Residue Arg-141 coordinates AMP. A Nuclear localization signal motif is present at residues 204 to 208 (KKKGK). Substrate is bound at residue 213-216 (NEGY). Phosphotyrosine occurs at positions 216 and 219. Substrate is bound by residues 245-249 (YVGSM), Tyr-265, and Lys-275. Glu-281 contacts Mg(2+).

The protein belongs to the FBPase class 1 family. Homotetramer. Interacts with ALDOA; the interaction blocks inhibition by physiological concentrations of AMP and reduces inhibition by Ca(2+). Interacts with alpha-actinin and F-actin. It depends on Mg(2+) as a cofactor.

It is found in the cell junction. It localises to the cytoplasm. Its subcellular location is the nucleus. The protein localises to the myofibril. The protein resides in the sarcomere. It is found in the z line. The enzyme catalyses beta-D-fructose 1,6-bisphosphate + H2O = beta-D-fructose 6-phosphate + phosphate. It participates in carbohydrate biosynthesis; gluconeogenesis. With respect to regulation, subject to complex allosteric regulation. The enzyme can assume an active R-state, or an inactive T-state. Intermediate conformations may exist. AMP acts as an allosteric inhibitor. Fructose 2,6-bisphosphate acts as a competitive inhibitor. Strongly inhibited by Ca(2+). Functionally, catalyzes the hydrolysis of fructose 1,6-bisphosphate to fructose 6-phosphate in the presence of divalent cations and probably participates in glycogen synthesis from carbohydrate precursors, such as lactate. In Oryctolagus cuniculus (Rabbit), this protein is Fructose-1,6-bisphosphatase isozyme 2 (FBP2).